An 890-amino-acid polypeptide reads, in one-letter code: Translation initiation factor IF-2 (890 aa).

The tract at residues 45–303 (LIDHLNQKNS…SLQQGFQKPA (259 aa)) is disordered. The segment covering 67–81 (STLNIPGTGGKSKSV) has biased composition (polar residues). Residues 92 to 217 (VKRDPQEAER…RMAEENKWTD (126 aa)) are compositionally biased toward basic and acidic residues. The segment covering 252-266 (GRGRNAKAARPKKGN) has biased composition (basic residues). The span at 267–280 (KHAESKADREEARA) shows a compositional bias: basic and acidic residues. Residues 389–558 (PRAPVVTIMG…LLQAEVLELK (170 aa)) enclose the tr-type G domain. The tract at residues 398 to 405 (GHVDHGKT) is G1. 398 to 405 (GHVDHGKT) lines the GTP pocket. A G2 region spans residues 423–427 (GITQH). Positions 444–447 (DTPG) are G3. GTP is bound by residues 444 to 448 (DTPGH) and 498 to 501 (NKID). The tract at residues 498–501 (NKID) is G4. Residues 534 to 536 (SAK) form a G5 region. Lys-808 is modified (N6-acetyllysine).

This sequence belongs to the TRAFAC class translation factor GTPase superfamily. Classic translation factor GTPase family. IF-2 subfamily.

It localises to the cytoplasm. Functionally, one of the essential components for the initiation of protein synthesis. Protects formylmethionyl-tRNA from spontaneous hydrolysis and promotes its binding to the 30S ribosomal subunits. Also involved in the hydrolysis of GTP during the formation of the 70S ribosomal complex. The polypeptide is Translation initiation factor IF-2 (Shigella boydii serotype 18 (strain CDC 3083-94 / BS512)).